A 565-amino-acid chain; its full sequence is Periplasmic trehalase (565 aa).

The N-terminal stretch at 1-30 is a signal peptide; the sequence is MKSPAPSRPQKMALIPACIFLCFAALSVQA. Residues R152, 159 to 160, N196, 205 to 207, 277 to 279, and G310 contribute to the substrate site; these read WD, RSQ, and RPE. Active-site proton donor/acceptor residues include D312 and E496. Residue E511 coordinates substrate. The disordered stretch occupies residues 539 to 565; it reads CDNVPATRPLSESTTQPLKQKEAEPTP.

The protein belongs to the glycosyl hydrolase 37 family. Monomer.

Its subcellular location is the periplasm. It catalyses the reaction alpha,alpha-trehalose + H2O = alpha-D-glucose + beta-D-glucose. Functionally, provides the cells with the ability to utilize trehalose at high osmolarity by splitting it into glucose molecules that can subsequently be taken up by the phosphotransferase-mediated uptake system. The protein is Periplasmic trehalase of Escherichia coli O1:K1 / APEC.